Here is a 284-residue protein sequence, read N- to C-terminus: Proton-translocating ferredoxin:NAD(+) oxidoreductase complex subunit B (284 aa).

The tract at residues 1–26 is hydrophobic; it reads MNTVIMILVVMTIIGLIFGLVLAYVN. Residues 32 to 92 form the 4Fe-4S domain; the sequence is EVNPLVDLVE…AEQVAKLTGK (61 aa). 20 residues coordinate [4Fe-4S] cluster: cysteine 49, cysteine 52, cysteine 57, cysteine 75, cysteine 138, cysteine 142, cysteine 148, cysteine 152, cysteine 172, cysteine 175, cysteine 178, cysteine 182, cysteine 217, cysteine 220, cysteine 223, cysteine 227, cysteine 246, cysteine 249, cysteine 254, and cysteine 258. 4 consecutive 4Fe-4S ferredoxin-type domains span residues 133–162, 163–192, 206–237, and 239–269; these read GGPKACKYGCLGFGTCVKSCPFGAMAMGSN, GLPIIDTDICTGCGTCVSACPKQVLGFRPV, GGAVRKACSVGCLGCGLCAKNCPNDAIKVENN, and AVVDQSICASCSEATCLAKCPTGAIKAIVSG.

This sequence belongs to the 4Fe4S bacterial-type ferredoxin family. RnfB subfamily. The complex is composed of six subunits: RnfA, RnfB, RnfC, RnfD, RnfE and RnfG. The cofactor is [4Fe-4S] cluster.

The protein resides in the cell membrane. Part of a membrane-bound complex that couples electron transfer with translocation of ions across the membrane. Couples electron transfer from reduced ferredoxin to NAD(+) with translocation of H(+) out of the cell. Essential for energy conservation during autotrophic growth. Contributes to ATP synthesis during heterotrophic growth. The chain is Proton-translocating ferredoxin:NAD(+) oxidoreductase complex subunit B from Clostridium ljungdahlii (strain ATCC 55383 / DSM 13528 / PETC).